We begin with the raw amino-acid sequence, 133 residues long: Methylglyoxal synthase (133 aa).

One can recognise an MGS-like domain in the interval 1–133; it reads MPPKPRIALI…ARENGAAQAG (133 aa). Residues His12, Lys16, 38–41, and 58–59 each bind substrate; these read TGTT and SG. Asp64 (proton donor/acceptor) is an active-site residue. His91 lines the substrate pocket.

It belongs to the methylglyoxal synthase family.

The catalysed reaction is dihydroxyacetone phosphate = methylglyoxal + phosphate. Its function is as follows. Catalyzes the formation of methylglyoxal from dihydroxyacetone phosphate. This chain is Methylglyoxal synthase, found in Cupriavidus taiwanensis (strain DSM 17343 / BCRC 17206 / CCUG 44338 / CIP 107171 / LMG 19424 / R1) (Ralstonia taiwanensis (strain LMG 19424)).